The chain runs to 166 residues: Protein UL5 (166 aa).

As to quaternary structure, interacts with host IQGAP1.

The protein localises to the host cytoplasm. May play a role in rearrangement of cellular cytoskeleton towards an efficient viral assembly and spreading. This is Protein UL5 (UL5) from Human cytomegalovirus (strain Merlin) (HHV-5).